The following is a 351-amino-acid chain: Probable protein phosphatase 2C 41 (351 aa).

One can recognise a PPM-type phosphatase domain in the interval 62-348 (FTSICSNRGE…DDISVLCLFF (287 aa)). 4 residues coordinate Mn(2+): Asp98, Gly99, Asp293, and Asp339.

It belongs to the PP2C family. Requires Mg(2+) as cofactor. Mn(2+) serves as cofactor.

The catalysed reaction is O-phospho-L-seryl-[protein] + H2O = L-seryl-[protein] + phosphate. It catalyses the reaction O-phospho-L-threonyl-[protein] + H2O = L-threonyl-[protein] + phosphate. The protein is Probable protein phosphatase 2C 41 of Arabidopsis thaliana (Mouse-ear cress).